Reading from the N-terminus, the 128-residue chain is Protein ApaG (128 aa).

An ApaG domain is found at 1–123; sequence MTSSPDITVS…FRLDIAPESG (123 aa).

This chain is Protein ApaG, found in Deinococcus radiodurans (strain ATCC 13939 / DSM 20539 / JCM 16871 / CCUG 27074 / LMG 4051 / NBRC 15346 / NCIMB 9279 / VKM B-1422 / R1).